Here is a 341-residue protein sequence, read N- to C-terminus: Glyceraldehyde-3-phosphate dehydrogenase 2 (341 aa).

Residues 12–13 (RI), R78, and T120 contribute to the NAD(+) site. D-glyceraldehyde 3-phosphate-binding positions include 152-154 (SCT) and T183. Residue C153 is the Nucleophile of the active site. N184 contacts NAD(+). D-glyceraldehyde 3-phosphate contacts are provided by residues R198, 211–212 (TG), and R234. N313 serves as a coordination point for NAD(+).

This sequence belongs to the glyceraldehyde-3-phosphate dehydrogenase family. As to quaternary structure, homotetramer.

It is found in the cytoplasm. It catalyses the reaction D-glyceraldehyde 3-phosphate + phosphate + NAD(+) = (2R)-3-phospho-glyceroyl phosphate + NADH + H(+). Its pathway is carbohydrate degradation; glycolysis; pyruvate from D-glyceraldehyde 3-phosphate: step 1/5. Functionally, catalyzes the oxidative phosphorylation of glyceraldehyde 3-phosphate (G3P) to 1,3-bisphosphoglycerate (BPG) using the cofactor NAD. The first reaction step involves the formation of a hemiacetal intermediate between G3P and a cysteine residue, and this hemiacetal intermediate is then oxidized to a thioester, with concomitant reduction of NAD to NADH. The reduced NADH is then exchanged with the second NAD, and the thioester is attacked by a nucleophilic inorganic phosphate to produce BPG. The polypeptide is Glyceraldehyde-3-phosphate dehydrogenase 2 (gapA2) (Staphylococcus aureus (strain COL)).